We begin with the raw amino-acid sequence, 396 residues long: MTVYTASVTAPVNIATLKYWGKRDTKLNLPTNSSISVTLSQDDLRTLTSAATAPEFERDTLWLNGEPHSIDNERTQNCLRDLRQLRKEMESKDASLPTLSQWKLHIVSENNFPTAAGLASSAAGFAALVSAIAKLYQLPQSTSEISRIARKGSGSACRSLFGGYVAWEMGKAEDGHDSMAVQIADSSDWPQMKACVLVVSDIKKDVSSTQGMQLTVATSELFKERIEHVVPKRFEVMRKAIVEKDFATFAKETMMDSNSFHATCLDSFPPIFYMNDTSKRIISWCHTINQFYGETIVAYTFDAGPNAVLYYLAENESKLFAFIYKLFGSVPGWDKKFTTEQLEAFNHQFESSNFTARELDLELQKDVARVILTQVGSGPQETNESLIDAKTGLPKE.

(R)-5-diphosphomevalonate-binding positions include 19–22 (YWGK), Arg74, 153–158 (SGSACR), and Thr209.

The protein belongs to the diphosphomevalonate decarboxylase family. Homodimer.

The enzyme catalyses (R)-5-diphosphomevalonate + ATP = isopentenyl diphosphate + ADP + phosphate + CO2. The protein operates within isoprenoid biosynthesis; isopentenyl diphosphate biosynthesis via mevalonate pathway; isopentenyl diphosphate from (R)-mevalonate: step 3/3. Its function is as follows. Diphosphomevalonate decarboxylase; part of the second module of ergosterol biosynthesis pathway that includes the middle steps of the pathway. MVD1/ERG19 converts diphosphomevalonate into isopentenyl diphosphate. The second module is carried out in the vacuole and involves the formation of farnesyl diphosphate, which is also an important intermediate in the biosynthesis of ubiquinone, dolichol, heme and prenylated proteins. Activity by the mevalonate kinase ERG12 first converts mevalonate into 5-phosphomevalonate. 5-phosphomevalonate is then further converted to 5-diphosphomevalonate by the phosphomevalonate kinase ERG8. The diphosphomevalonate decarboxylase MVD1/ERG19 then produces isopentenyl diphosphate. The isopentenyl-diphosphate delta-isomerase IDI1 then catalyzes the 1,3-allylic rearrangement of the homoallylic substrate isopentenyl (IPP) to its highly electrophilic allylic isomer, dimethylallyl diphosphate (DMAPP). Finally the farnesyl diphosphate synthase ERG20 catalyzes the sequential condensation of isopentenyl pyrophosphate with dimethylallyl pyrophosphate, and then with the resultant geranylpyrophosphate to the ultimate product farnesyl pyrophosphate. This chain is Diphosphomevalonate decarboxylase, found in Saccharomyces cerevisiae (strain ATCC 204508 / S288c) (Baker's yeast).